Reading from the N-terminus, the 1156-residue chain is Chromosome partition protein Smc (1156 aa).

ATP is bound at residue 37-44; sequence PNGAGKSN. The stretch at 167–499 forms a coiled coil; that stretch reads SGIGEYERKK…AIEREVRSFS (333 aa). An SMC hinge domain is found at 509–624; that stretch reads KGVYGSVSEL…VENFESAKAI (116 aa). Positions 654–1001 form a coiled coil; that stretch reads GELNKRYYEE…EETENKKRKV (348 aa).

The protein belongs to the SMC family. As to quaternary structure, homodimer.

Its subcellular location is the cytoplasm. Its function is as follows. Required for chromosome condensation and partitioning. This Aquifex aeolicus (strain VF5) protein is Chromosome partition protein Smc.